The sequence spans 239 residues: LexA repressor (239 aa).

The segment at residues 26-46 (FDEMKDALDLASKSGIHRLIT) is a DNA-binding region (H-T-H motif). Positions 84–107 (SPSVIEGSLGKPQPVATPAPAKSV) are disordered. Active-site for autocatalytic cleavage activity residues include Ser-159 and Lys-197.

Belongs to the peptidase S24 family. In terms of assembly, homodimer.

It carries out the reaction Hydrolysis of Ala-|-Gly bond in repressor LexA.. Represses a number of genes involved in the response to DNA damage (SOS response), including recA and lexA. In the presence of single-stranded DNA, RecA interacts with LexA causing an autocatalytic cleavage which disrupts the DNA-binding part of LexA, leading to derepression of the SOS regulon and eventually DNA repair. The protein is LexA repressor of Rhizobium johnstonii (strain DSM 114642 / LMG 32736 / 3841) (Rhizobium leguminosarum bv. viciae).